Here is a 323-residue protein sequence, read N- to C-terminus: tRNA (guanine(9)-N1)-methyltransferase (323 aa).

The segment covering 1–16 has biased composition (polar residues); that stretch reads MTEQTSEATVVNNSPA. 2 disordered regions span residues 1-34 and 192-215; these read MTEQTSEATVVNNSPAPTIPKIKREKPTPEEIEE and TGAPNSESKDNDGNSNSNTTNSTD. Positions 25 to 34 are enriched in basic and acidic residues; the sequence is EKPTPEEIEE. An SAM-dependent MTase TRM10-type domain is found at 99-319; it reads KAQPIPSRQI…KVLPPRKIKS (221 aa). Low complexity predominate over residues 204-215; the sequence is GNSNSNTTNSTD. S-adenosyl-L-methionine is bound by residues 225–226, G245, 249–253, C257, L271, and 283–285; these read LT, DKNRH, and HVL. The Proton acceptor role is filled by D249.

It belongs to the class IV-like SAM-binding methyltransferase superfamily. TRM10 family. In terms of assembly, monomer.

The protein resides in the cytoplasm. The protein localises to the nucleus. The catalysed reaction is guanosine(9) in tRNA + S-adenosyl-L-methionine = N(1)-methylguanosine(9) in tRNA + S-adenosyl-L-homocysteine + H(+). In terms of biological role, S-adenosyl-L-methionine-dependent guanine N(1)-methyltransferase that catalyzes the formation of N(1)-methylguanine at position 9 (m1G9) in cytoplasmic tRNA. This is tRNA (guanine(9)-N1)-methyltransferase from Candida albicans (strain SC5314 / ATCC MYA-2876) (Yeast).